Here is a 417-residue protein sequence, read N- to C-terminus: NADH-quinone oxidoreductase subunit D (417 aa).

The protein belongs to the complex I 49 kDa subunit family. In terms of assembly, NDH-1 is composed of 14 different subunits. Subunits NuoB, C, D, E, F, and G constitute the peripheral sector of the complex.

The protein localises to the cell inner membrane. It catalyses the reaction a quinone + NADH + 5 H(+)(in) = a quinol + NAD(+) + 4 H(+)(out). Its function is as follows. NDH-1 shuttles electrons from NADH, via FMN and iron-sulfur (Fe-S) centers, to quinones in the respiratory chain. The immediate electron acceptor for the enzyme in this species is believed to be ubiquinone. Couples the redox reaction to proton translocation (for every two electrons transferred, four hydrogen ions are translocated across the cytoplasmic membrane), and thus conserves the redox energy in a proton gradient. This chain is NADH-quinone oxidoreductase subunit D, found in Cupriavidus taiwanensis (strain DSM 17343 / BCRC 17206 / CCUG 44338 / CIP 107171 / LMG 19424 / R1) (Ralstonia taiwanensis (strain LMG 19424)).